Consider the following 46-residue polypeptide: Defensin-like protein AX1 (46 aa).

Intrachain disulfides connect cysteine 3/cysteine 46, cysteine 14/cysteine 34, cysteine 20/cysteine 40, and cysteine 24/cysteine 42.

As to expression, leaves and flowers.

Strong inhibiting activity against C.beticola and other filamentous fungi. Little or no effect against bacteria. This is Defensin-like protein AX1 from Beta vulgaris (Sugar beet).